Reading from the N-terminus, the 151-residue chain is Probable cGMP 3',5'-cyclic phosphodiesterase subunit delta (151 aa).

Belongs to the PDE6D/unc-119 family. As to quaternary structure, interacts with Pde6.

The protein resides in the nucleus. It localises to the cytoplasm. In Anopheles gambiae (African malaria mosquito), this protein is Probable cGMP 3',5'-cyclic phosphodiesterase subunit delta.